Reading from the N-terminus, the 503-residue chain is V-type proton ATPase subunit B (503 aa).

Position 378 (Arg378) interacts with ATP. Phosphoserine is present on residues Ser491, Ser492, Ser502, and Ser503.

Belongs to the ATPase alpha/beta chains family. In terms of assembly, V-ATPase is a heteromultimeric enzyme composed of a peripheral catalytic V1 complex (components A to H) attached to an integral membrane V0 proton pore complex (components: a, c, c', c'', d, e, f and VOA1). Interacts with rav1.

It is found in the vacuole membrane. Non-catalytic subunit of the V1 complex of vacuolar(H+)-ATPase (V-ATPase), a multisubunit enzyme composed of a peripheral complex (V1) that hydrolyzes ATP and a membrane integral complex (V0) that translocates protons. V-ATPase is responsible for acidifying and maintaining the pH of intracellular compartments. The sequence is that of V-type proton ATPase subunit B from Schizosaccharomyces pombe (strain 972 / ATCC 24843) (Fission yeast).